The chain runs to 233 residues: Orotidine 5'-phosphate decarboxylase (233 aa).

Residues D13, K35, 62 to 71, T122, R182, Q191, G211, and R212 each bind substrate; that span reads DLKFHDIPNT. K64 serves as the catalytic Proton donor.

It belongs to the OMP decarboxylase family. Type 1 subfamily. In terms of assembly, homodimer.

The enzyme catalyses orotidine 5'-phosphate + H(+) = UMP + CO2. The protein operates within pyrimidine metabolism; UMP biosynthesis via de novo pathway; UMP from orotate: step 2/2. In terms of biological role, catalyzes the decarboxylation of orotidine 5'-monophosphate (OMP) to uridine 5'-monophosphate (UMP). This is Orotidine 5'-phosphate decarboxylase from Pseudomonas putida (strain GB-1).